We begin with the raw amino-acid sequence, 351 residues long: Aromatic amino acid aminotransferase (351 aa).

K215 carries the N6-(pyridoxal phosphate)lysine modification.

It belongs to the class-II pyridoxal-phosphate-dependent aminotransferase family. In terms of assembly, homodimer. It depends on pyridoxal 5'-phosphate as a cofactor.

The enzyme catalyses an aromatic L-alpha-amino acid + 2-oxoglutarate = an aromatic oxo-acid + L-glutamate. Aminotransferase that catalyzes the conversion of aromatic amino acids and 2-oxoglutarate into corresponding aromatic oxo acids and L-glutamate. In Mycolicibacterium vanbaalenii (strain DSM 7251 / JCM 13017 / BCRC 16820 / KCTC 9966 / NRRL B-24157 / PYR-1) (Mycobacterium vanbaalenii), this protein is Aromatic amino acid aminotransferase.